A 186-amino-acid polypeptide reads, in one-letter code: CRS2-like protein, chloroplastic (186 aa).

Residues 1 to 49 (MAMTAASVFGSGGCLELLTSSKAMRGKLWTRLAPFISKRHASTSQTSLS) constitute a chloroplast transit peptide. Position 73 (tyrosine 73) interacts with tRNA. Catalysis depends on histidine 78, which acts as the Proton acceptor. TRNA contacts are provided by tyrosine 123, asparagine 125, and asparagine 171.

This sequence belongs to the PTH family.

It localises to the plastid. The protein resides in the chloroplast. In Oryza sativa subsp. japonica (Rice), this protein is CRS2-like protein, chloroplastic.